The chain runs to 8525 residues: Nebulin (8525 aa).

Positions 34 to 70 (TTTTRTSDYEQSETSKPALAQPALAQPASAKPVERRK) are disordered. Residues 48 to 64 (SKPALAQPALAQPASAK) show a composition bias toward low complexity. Nebulin repeat units follow at residues 83–110 (TPYIAHSQKMQDLFSPNKYKEKFEKTKG), 112–146 (PYASTTDTPELRRIKKVQDQLSEVKYRMDGDVAKT), 156–181 (DIEHAKKVSQQVSKVLYKQNWEDTKD), 182–216 (KYLLPPDAPELVQAVKNTAMFSKKLYTEDWEADKS), 217–251 (LFYPYNDSPELRRVAQAQKALSDVAYKKGLAEQQA), 252–286 (QFTPLADPPDIEFAKKVTNQVSKQKYKEDYENKIK), 296–321 (EVANARMNADNISTRKYQEDFENMKD), 323–357 (IYFMQTETPEYKMNKKAGVAASKVKYKEDYEKNKG), 362–396 (NVLPASENPQLRQLKAAGDALSDKLYKENYEKTKA), 403–431 (ETPKFKLDTVLQNFSSDKKYKDSYLKDIL), 433–467 (HYVGSFEDPYHSHCMKVTAQNSDKNYKAEYEEDRG), 501–535 (KFTQVTDSPVLLQAQVNSKQLSDLNYKAKHESEKF), 536–570 (KCHIPPDTPAFIQHKVNAYNLSDNLYKQDWEKSKA), 572–606 (KFDIKVDAIPLLAAKANTKNTSDVMYKKDYEKNKG), 610–644 (GVLSINDDPKMLHSLKVAKNQSDRLYKENYEKTKA), 680–714 (HYVGSMEDPYHTHCMKVAAQNSDKSYKAEYEEDKG), 748–782 (KFTAVTDSPVLLQAQLNTKQLSDLNYKAKHEGEKF), 783–817 (KCHIPADAPQFIQHRVNAYNLSDNVYKQDWEKSKA), 819–853 (KFDIKVDAIPLLAAKANTKNTSDVMYKKDYEKSKG), 857–891 (GALSINDDPKMLHSLKTAKNQSDREYRKDYEKSKT), 892–918 (IYTAPLDMLQVTQAKKSQAIASDVDYK), 923–957 (SYSYPPDSINVDLAKKAYALQSDVEYKADYNSWMK), 968–986 (EMEKAKRASDILNEKKYRQ), 992–1026 (KFTSIEDAPITVQSKINQAQRSDIAYKAKGEEIIH), 1027–1061 (KYNLPPDLPQFIQAKVNAYNISENMYKADLKDLSK), 1063–1097 (GYDLRTDAIPIRAAKAARQAASDVQYKKDYEKAKG), 1101–1135 (GFQSLQDDPKLVHYMNVAKIQSDREYKKDYEKTKS), 1136–1166 (KYNTPHDMFNVVAAKKAQDVVSNVNYKHSLH), 1167–1201 (HYTYLPDAMDLELSKNMMQIQSDNVYKEDYNNWMK), 1212–1230 (DVEKVKKAGDALNEKKYRQ), 1236–1270 (KFTSIVDSPVMVQAKQNTKQVSDILYKAKGEDVKH), 1271–1305 (KYTMSPDLPQFLQAKCNAYNISDVCYKRDWYDLIA), 1307–1341 (GNNVLGDAIPITAAKASRNIASDYKYKEAYEKSKG), 1345–1379 (GFRSLQDDPKLVHYMNVAKLQSDREYKKNYENTKT), 1380–1407 (SYHTPGDMVSITAAKMAQDVATNVNYKQ), 1411–1445 (HYTYLPDAMSLEHTRNVNQIQSDNVYKDEYNSFLK), 1456–1474 (EVEKVKKAGDALNERKYRQ), 1480–1514 (KFTSVPDSMGMVLAQHNTKQLSDLNYKVEGEKLKH), 1515–1549 (KYTIDPELPQFIQAKVNALNMSDAHYKADWKKTIA), 1551–1585 (GYDLRPDAIPIVAAKSSRNIASDCKYKEAYEKAKG), 1589–1623 (GFLSLQDDPKLVHYMNVAKIQSDREYKKGYEASKT), 1624–1654 (KYHTPLDMVSVTAAKKSQEVATNANYRQSYH), 1655–1689 (HYTLLPDALNVEHSRNAMQIQSDNLYKSDFTNWMK), 1697–1725 (ESLEVEKAKKAGEILSEKKYRQHPEKLKF), 1730–1758 (DTMEQALNKSNKLNMDKRLYTEKWNKDKT), 1759–1793 (TIHVMPDTPDILLSRVNQITMSDKLYKAGWEEEKK), 1795–1829 (GYDLRPDAIAIKAARASRDIASDYKYKKAYEQAKG), 1833–1867 (GFRSLEDDPKLVHFMQVAKMQSDREYKKGYEKSKT), 1868–1894 (SFHTPVDMLSVVAAKKSQEVATNANYR), 1899–1933 (TYNMLPDAMSFELAKNMMQIQSDNQYKADYADFMK), 1949–1962 (KKAMEIISEKKYRQ), 1968–2002 (KYSTLMDSMNMVLAQNNAKIMNEHLYKQAWEADKT), 2003–2037 (KVHIMPDIPQIILAKANAINMSDKLYKLSLEESKK), 2039–2073 (GYDLRPDAIPIKAAKASRDIASDYKYKYNYEKGKG), 2077–2111 (GFRSLEDDPKLVHSMQVAKMQSDREYKKNYENTKT), 2112–2138 (SYHTPADMLSVTAAKDAQANITNTNYK), 2143–2177 (KYILLPDAMNIELTRNMNRIQSDNEYKQDYNEWYK), 2188–2206 (EVEKAKKATEYASDQKYRQ), 2212–2246 (QFKKLTDSMDMVLAKQNAHTMNKHLYTIDWNKDKT), 2247–2281 (KIHVMPDTPDILQAKQNQTLYSQKLYKLGWEEALK), 2283–2317 (GYDLPVDAISVQLAKASRDIASDYKYKQGYRKQLG), 2321–2355 (GFRSLQDDPKLVLSMNVAKMQSEREYKKDFEKWKT), 2356–2382 (KFSSPVDMLGVVLAKKCQELVSDVDYK), 2387–2421 (QWTCLPDQNDVVQAKKVYELQSENLYKSDLEWLRG), 2436–2449 (KRASEIISEKKYRQ), 2455–2489 (KFTSIPDAMDIVLAKTNAKNRSDRLYREAWDKDKT), 2490–2524 (QIHIMPDTPDIVLAKANLINTSDKLYRMGYEELKR), 2526–2560 (GYDLPVDAIPIKAAKASREIASEYKYKEGFRKQLG), 2564–2598 (GARNIEDDPKMMWSMHVAKIQSDREYKKDFEKWKT), 2599–2625 (KFSSPVDMLGVVLAKKCQTLVSDVDYK), 2630–2664 (QWTCLPDQSDVIHARQAYDLQSDNLYKSDLQWLKG), 2679–2692 (KRATQILSDHVYRQ), 2698–2732 (KFSSLMDSIPMVLAKNNAITMNHRLYTEAWDKDKT), 2733–2767 (TVHIMPDTPEVLLAKQNKVNYSEKLYKLGLEEAKR), 2769–2803 (GYDMRVDAIPIKAAKASRDIASEFKYKEGYRKQLG), 2807–2841 (GARAIRDDPKMMWSMHVAKIQSDREYKKDFEKWKT), 2842–2868 (KFSSPVDMLGVVLAKKCQTLVSDVDYK), 2873–2907 (QWTCLPDQSDVIHARQAYDLQSDNMYKSDLQWMRG), 2917–2935 (DVEKCKRATEILSDKIYRQ), 2941–2975 (KFTSVTDSLEQVLAKNNAITMNKRLYTEAWDKDKT), 2976–3010 (QIHIMPDTPEIMLARMNKINYSESLYKLANEEAKK), 3012–3046 (GYDLRSDAIPIVAAKASRDIISDYKYKDGYCKQLG), 3050–3084 (GARNIEDDPKMMWSMHVAKIQSDREYKKDFEKWKT), 3085–3111 (KFSSPVDMLGVVLAKKCQTLVSDVDYK), 3116–3150 (EWTCLPDQSDVIHARQAYDLQSDNIYKSDLQWLRG), 3158–3178 (SMDVVKCKRATEILSDNIYRQ), 3184–3218 (KFTSVTDSLEQVLAKNNALNMNKRLYTEAWDKDKT), 3219–3253 (QIHIMPDTPEIMLARQNKINYSETLYKLANEEAKK), 3255–3289 (GYDLRSDAIPIVAAKASRDVISDYKYKDGYRKQLG), 3293–3327 (GARNIEDDPKMMWSMHVAKIQSDREYKKDFEKWKT), 3328–3354 (KFSSPVDMLGVVLAKKCQTLVSDVDYK), 3359–3393 (EWTCLPDQNDVIHARQAYDLQSDNIYKSDLQWLRG), 3401–3421 (SMDVVKCKRAAEILSDNIYRQ), 3427–3461 (KFTSVTDSLEQVLAKNNALNMNKRLYTEAWDKDKT), 3462–3496 (QVHIMPDTPEIMLARQNKINYSESLYRQAMEEAKK), 3498–3532 (GYDLRSDAIPIVAAKASRDIASDYKYKEAYRKQLG), 3536–3570 (GARAVHDDPKIMWSLHIAKVQSDREYKKDFEKYKT), 3571–3597 (RYSSPVDMLGIVLAKKCQTLVSDVDYK), 3602–3636 (EWICLPDQNDIIHARKAYDLQSDNLYKSDLEWMKG), 3643–3664 (DSLEVVRAKRAGELLSDTIYRQ), 3670–3704 (KFTSITDTPEQVLAKNNALNMNKRLYTEAWDNDKK), 3705–3739 (TIHVMPDTPEIMLAKLNRINYSDKLYKLALEESKK), 3741–3775 (GYDLRLDAIPIQAAKASRDIASDYKYKEGYRKQLG), 3779–3813 (GARNIKDDPKMMWSIHVAKIQSDREYKKEFEKWKT), 3814–3840 (KFSSPVDMLGVVLAKKCQILVSDIDYK), 3845–3879 (EWTCLPDQNDVIQARKAYDLQSDAIYKSDLEWLRG), 3889–3907 (EVEKVKRAGEILSDRKYRQ), 3913–3947 (KFTCITDTPEIVLAKNNALTMSKHLYTEAWDADKT), 3948–3982 (SIHVMPDTPDILLAKSNSANISQKLYTKGWDESKM), 3984–4018 (DYDLRADAISIKSAKASRDIASDYKYKEAYEKQKG), 4022–4056 (GAQSIEDDPKIMCAIHAGKIQSEREYKKEFQKWKT), 4057–4083 (KFSSPVDMLSILLAKKCQTLVTDIDYR), 4088–4122 (EWTCMPDQNDIIQAKKAYDLQSDSVYKADLEWLRG), 4132–4149 (EMNRVKVAQDLVNERLYR), 4156–4190 (SFTSIVDTPEVVLAKANSLQISEKLYQEAWNKDKS), 4191–4225 (NITIPSDTPEMLQAHINALQISNKLYQKDWNDAKQ), 4227–4261 (GYDIRADAIEIKHAKASREIASEYKYKEGYRKQLG), 4265–4299 (GFRTLQDDPKSVWAIHAAKIQSDREYKKAYEKSKG), 4300–4326 (IHNTPLDMMSIVQAKKCQVLVSDIDYR), 4331–4365 (QWTCLPDQNDVIQAKKAYDLQSDNLYKSDLEWLKG), 4375–4392 (EVMRVKNAQNLLNERLYR), 4399–4433 (KFTSIVDTPEVIQAKINAVQISEPLYRDAWEKEKA), 4434–4468 (NVNVPADTPLMLQSKINALQISNKRYQQAWEDVKM), 4470–4504 (GYDLRADAIGIQHAKASRDIASDYLYKTAYEKQKG), 4508–4542 (GCRSAKEDPKLVWAANVLKMQNDRLYKKAYNDHKA), 4543–4569 (KISIPVDMVSISAAKEGQALASDVDYR), 4574–4608 (HWSCFPDQNDVIQARKAYDLQSDSVYKADLEWLRG), 4618–4635 (EMNRVKVAQDLVNERLYR), 4642–4676 (SFTSIVDTPEVVLAKANSLQISEKLYQEAWNKDKS), 4677–4711 (NITIPSDTPEMLQAHINALQISNKLYQKDWNDTKQ), 4713–4747 (GYDIRADAIEIKHAKASREIASEYKYKEGYRKQLG), 4751–4785 (GFRTLQDDPKSVWAIHAAKIQSDREYKKAYEKSKG), 4786–4812 (IHNTPLDMMSIVQAKKCQVLVSDIDYR), 4817–4851 (QWTCLPDQNDVIQAKKAYDLQSDNLYKSDLEWLKG), 4861–4878 (EVMRVKNAQNLLNERLYR), 4885–4919 (KFTSIVDTPEVIQAKINAVQISEPLYRNAWEKEKA), 4920–4954 (NVNVPADTPLMLQSKINALQISNKRYQQAWEDVKM), 4956–4990 (GYDLRADAIGIQHAKASRDIASDYLYKTAYEKQKG), 4994–5028 (GCRSAKEDPKLVWAANVLKMQNDRLYKKAYNDHKA), 5029–5055 (KISIPVDMVSISAAKEGQALASDVDYR), 5060–5094 (HWSCFPDQNDVIQARKAYDLQSDSVYKADLEWLRG), 5104–5121 (EMNRVKVAQDLVNERLYR), 5128–5162 (SFTSIVDTPEVVLAKANSLQISEKLYQEAWNKDKS), 5163–5197 (NITIPSDTPEMLQAHINALQISNKLYQKDWNDTKQ), 5199–5233 (GYDIRADAIEIKHAKASREIASEYKYKEGYRKQLG), 5237–5271 (GFRTLQDDPKSVWAIHAAKIQSDREYKKAYEKSKG), 5272–5298 (IHNTPLDMMSIVQAKKCQVLVSDIDYR), 5303–5337 (QWTCLPDQNDVIQAKKAYDLQSDNLYKSDLEWLKG), 5347–5364 (EVMRVKNAQNLLNERLYR), 5371–5405 (KFTSIVDTPEVIQAKINAVQISEPLYRDAWEKEKA), 5406–5440 (NVNVPADTPLMLQSKINALQISNKRYQQAWEDVKM), 5442–5476 (GYDLRADAIGIQHAKASRDIASDYLYKTAYEKQKG), 5480–5514 (GCRSAKEDPKLVWAANVLKMQNDRLYKKAYNDHKA), 5515–5541 (KISIPVDMVSISAAKEGQALASDVDYR), 5546–5580 (RWSCFPDQNDVIQARKAYDLQSDALYKADLEWLRG), 5588–5607 (SPEVLRVKNAQNIFCDSVYR), 5614–5648 (KYTSIVDTPEVVLAKSNAENISIPKYREVWDKDKT), 5649–5683 (SIHIMPDTPEINLARANALNVSNKLYREGWDEMKA), 5690–5718 (DAIPIQAAKASREIASDYKYKLDHEKQKG), 5722–5756 (GTLTARDDNKIRWALIADKLQNEREYRLDWAKWKA), 5757–5783 (KIQSPVDMLSILHSKNSQALVSDMDYR), 5788–5822 (QWTCMPDQNDVIQAKKAYELQSDNVYKADLEWLRG), 5829–5853 (DSVSVNHAKHAADIFSEKKYRTKIE), 5856–5890 (NFTPVDDRVDYVTAKQSGEILDDIKYRKDWNATKS), 5893–5924 (TLTETPLLHTAQEAARILDQYLYKEGWERQKA), 5926–5960 (GYILPPDAVPFVHAHHCNDVQSELKYKAEHVKQKG), 5964–5998 (GVPTMRDDPKLVWFEHAGQIQNERLYKEDYHKTKA), 5999–6025 (KINIPADMVSVLAAKQGQTLVSDIDYR), 6030–6064 (QWMCHPDQNDVIQARKAYDLQSDNVYRADLEWLRG), 6071–6099 (DSVDHVRVTKNQEMMSQIKYKKNALENYP), 6100–6134 (NFRSVVDPPEIVLAKINSVNQSDVKYKETFNKAKG), 6135–6169 (KYTFSPDTPHISHSKDMGKLYSTILYKGAWEGTKA), 6171–6205 (GYTLDERYIPIVGAKHADLVNSELKYKETYEKQKG), 6209–6243 (AGKVIGEFPGVVHCLDFQKMRSALNYRKHYEDTKA), 6244–6274 (NVHIPNDMMNHVLAKRCQYILSDLEYRHYFH), 6275–6309 (QWTSLLEEPNVIRVRNAQEILSDNVYKDDLNWLKG), 6316–6344 (DTPQILHAKKSYDLQSQLQYTAAGKENLQ), 6345–6379 (NYNLVTDTPLYVTAVQSGINASEVKYKENYHQIKD), 6380–6414 (KYTTVLETVDYDRTRNLKNLYSSNLYKEAWDRVKA), 6416–6450 (SYILPSSTLSLTHAKNQKHLASHIKYREEYEKFKA), 6458–6488 (VDDDPNTARCLRVGKLNIDRLYRSVYEKNKM), 6489–6515 (KIHIVPDMVEMVTAKDSQKKVSEIDYR), 6532–6554 (HVRKVTDQISDIVYKDDLNWLKG), 6561–6589 (DTPEILHAKHAYDLRDDIKYKAHMLKTRN), 6590–6624 (DYKLVTDTPVYVQAVKSGKQLSDAVYHYDYVHSVR), 6626–6660 (KVAPTTKTVDLDRALHAYKLQSSNLYKTSLRTLPT), 6661–6695 (GYRLPGDTPHFKHIKDTRYMSSYFKYKEAYEHTKA), 6697–6731 (GYTLGPKDVPFVHVRRVNNVTSERLYRELYHKLKD), 6732–6766 (KIHTTPDTPEIRQVKKTQEAVSELIYKSDFFKMQG), 6767–6801 (HMISLPYTPQVIHCRYVGDITSDIKYKEDLQVLKG), 6808–6836 (DTPDMVRSRHLRKLWSNYLYTDKARKMRD), 6837–6871 (KYKVVLDTPEYRKVQELKTHLSELVYRAAGKKQKS), 6872–6906 (IFTSVPDTPDLLRAKRGQKLQSQYLYVELATKERP), 6907–6941 (HHHAGNQTTALKHAKDVKDMVSEKKYKIQYEKMKD), 6942–6976 (KYTPVPDTPILIRAKRAYWNASDLRYKETFQKTKG), 6977–7011 (KYHTVKDALDIVYHRKVTDDISKIKYKENYMSQLG), 7012–7046 (IWRSIPDRPEHFHHRAVTDTVSDVKYKEDLTWLKG), 7053–7081 (DTPDFTLAEKNKTLYSKYKYKEVFERTKS), 7082–7110 (DFKYVADSPINRHFKYATQLMNERKYKSS), 7125–7151 (PDMLTALYNSHMWSQIKYRKNYEKSKD), 7152–7186 (KFTSIVDTPEHLRTTKVNKQISDILYKLEYNKAKP), 7188–7222 (GYTTIHDTPMLLHVRKVKDEVSDLKYKEVYQRNKS), 7223–7257 (NCTIEPDAVHIKAAKDAYKVNTNLDYKKQYEANKA), 7258–7292 (HWKWTPDRPDFLQAAKSSLQQSDFEYKLDREFLKG), 7297–7327 (VTDDKNTVLALRNTLIESDLKYKEKHVKERG), 7328–7362 (TCHAVPDTPQILLAKTVSNLVSENKYKDHVKKHLA), 7365–7399 (SYTTLPETRDTVHVKEVTKHVSDTNYKKKFVKEKG), 7402–7433 (NYSIMLEPPEVKHAMEVAKKQSDVAYRKDAKE), 7436–7470 (HYTTVADRPDIKKATQAAKQASEVEYRAKHRKEGS), 7479–7505 (PDIEMAKKAAKLSSQVKYRENFDKEKG), 7514–7542 (DSQLYKVMKDANNLASEVKYKADLKKLHK), 7543–7577 (PVTDMKESLIMNHVLNTSQLASSYQYKKKYEKSKG), 7578–7612 (HYHTIPDNLEQLHLKEATELQSIVKYKEKYEKERG), 7619–7647 (ETPTYITAKESQQMQSGKEYRKDYEESIK), 7650–7684 (NLTGLEVTPALLHVKYATKIASEKEYRKDLEESIR), 7687–7721 (GLTEMEDTPDMLRAKNATQILNEKEYKRDLELEVK), 7731–7759 (ETPDFMRARNATDIASQIKYKQSAEMEKA), 7760–7794 (NFTSVVDTPEIIHAQQVKNLSSQKKYKEDAEKSMS), 7795–7829 (YYETVLDTPEIQRVRENQKNFSLLQYQCDLKNSKG), 7830–7864 (KITVVQDTPEILRVKENQKNFSSVLYKEDVSPGTA), 7867–7888 (KTPEMMRVKQTQDHISSVKYKE), 7892–7921 (QGTPIPDLPEVKRVKETQKHISSVMYKENL), 7930–7957 (TPEIERVKRNQENFSSVLYKENLGKGIP), 7961–7988 (TPEMERVKRNQENFSSILYKENLSKGTP), 7992–8013 (TPEMERVKLNQENFSSVLYKEN), 8016–8045 (KGIPIPITPEMERVKHNQENFSSVLYKENL), 8054–8075 (TPEMQRVKHNQENLSSVLYKEN), 8078–8112 (KGTPLPVTPEMERVKHNQENISSVLYKENMGKGTP), 8116–8143 (TPEMERVKHNQENISSVLYKENMGKGTP), 8147–8168 (TPEMERVKHNQENISSVLYKEN), 8171–8205 (KATATPVTPEMQRVKRNQENISSVLYKENLGKATP), 8209–8232 (TPEMERVKRNQENFSSVLYKENMR), 8233–8267 (KATPTPVTPEMERAKRNQENISSVLYSDSFRKQIQ), 8269–8303 (KAAYVLDTPEMRRVRETQRHISTVKYHEDFEKHKG), and 8304–8330 (CFTPVVTDPITERVKKNMQDFSDINYR). Residues 8313–8468 (ITERVKKNMQ…SIPSHPSTAG (156 aa)) are interaction with SVIL. Disordered stretches follow at residues 8385 to 8422 (QAQRRSREQSRSASALSISGGEEKSEHSEAPDHHLSTY) and 8439 to 8463 (TTELPQQRSSSVATQQTTVSSIPSH). Residues 8405-8419 (GEEKSEHSEAPDHHL) are compositionally biased toward basic and acidic residues. The span at 8444-8459 (QQRSSSVATQQTTVSS) shows a compositional bias: low complexity. One can recognise an SH3 domain in the interval 8466-8525 (TAGKIFRAMYDYMAADADEVSFKDGDAIINVQAIDEGWMYGTVQRTGRTGMLPANYVEAI).

Monomer and homooligomer. Interacts with TTN/titin. Interacts with SVIL. Interacts (via nebulin repeats 160-164) with DES. As to expression, expressed in skeletal muscle (at protein level). Located in the thin filament of striated muscle.

The protein resides in the cytoplasm. It localises to the myofibril. Its subcellular location is the sarcomere. It is found in the cytoskeleton. Functionally, this giant muscle protein may be involved in maintaining the structural integrity of sarcomeres and the membrane system associated with the myofibrils. Binds and stabilize F-actin. The polypeptide is Nebulin (NEB) (Homo sapiens (Human)).